A 156-amino-acid polypeptide reads, in one-letter code: SsrA-binding protein (156 aa).

It belongs to the SmpB family.

The protein localises to the cytoplasm. Required for rescue of stalled ribosomes mediated by trans-translation. Binds to transfer-messenger RNA (tmRNA), required for stable association of tmRNA with ribosomes. tmRNA and SmpB together mimic tRNA shape, replacing the anticodon stem-loop with SmpB. tmRNA is encoded by the ssrA gene; the 2 termini fold to resemble tRNA(Ala) and it encodes a 'tag peptide', a short internal open reading frame. During trans-translation Ala-aminoacylated tmRNA acts like a tRNA, entering the A-site of stalled ribosomes, displacing the stalled mRNA. The ribosome then switches to translate the ORF on the tmRNA; the nascent peptide is terminated with the 'tag peptide' encoded by the tmRNA and targeted for degradation. The ribosome is freed to recommence translation, which seems to be the essential function of trans-translation. The protein is SsrA-binding protein of Renibacterium salmoninarum (strain ATCC 33209 / DSM 20767 / JCM 11484 / NBRC 15589 / NCIMB 2235).